The following is a 569-amino-acid chain: Vacuolar protein sorting-associated protein 53 B (569 aa).

Coiled-coil stretches lie at residues 53–90, 125–145, and 295–316; these read TRAK…VQDI, QVMT…AINE, and KEKS…FERE.

It belongs to the VPS53 family. As to quaternary structure, component of the Golgi-associated retrograde protein (GARP) complex.

It localises to the cytoplasm. Its subcellular location is the golgi apparatus. The protein resides in the trans-Golgi network membrane. It is found in the endosome membrane. Involved in retrograde transport from early and late endosomes to late Golgi, leading to the membrane fusion between late Golgi and endosomal vesicles. In Arabidopsis thaliana (Mouse-ear cress), this protein is Vacuolar protein sorting-associated protein 53 B.